A 670-amino-acid polypeptide reads, in one-letter code: Meiotic sister-chromatid recombination protein 6, mitochondrial (670 aa).

The N-terminal 27 residues, 1–27 (MLFSRASKIRVSQLMRRLQSTAVGRAA), are a transit peptide targeting the mitochondrion.

It localises to the mitochondrion. Its function is as follows. May be involved in the control of meiotic sister-chromatid recombination. The polypeptide is Meiotic sister-chromatid recombination protein 6, mitochondrial (MSC6) (Eremothecium gossypii (strain ATCC 10895 / CBS 109.51 / FGSC 9923 / NRRL Y-1056) (Yeast)).